The sequence spans 436 residues: EPS I polysaccharide export inner membrane protein EpsE (436 aa).

12 helical membrane passes run Val20–Leu40, Phe49–Gly69, Leu91–Leu111, Met132–Ala152, Ala160–Ile180, Val184–Ile204, Val234–Met254, Leu261–Leu281, Ala307–Gly327, Ala341–Leu361, Phe375–Leu395, and Gly396–Phe416.

To E.coli bicyclomycin resistance protein (BCR).

It is found in the cell inner membrane. Its function is as follows. Probably involved in polymerization and/or export of exopolysaccharide EPS I which functions as a virulence factor. May play a role in export of EPS I or its intermediates across the membranes. This chain is EPS I polysaccharide export inner membrane protein EpsE (epsE), found in Ralstonia nicotianae (strain ATCC BAA-1114 / GMI1000) (Ralstonia solanacearum).